The chain runs to 828 residues: Zinc finger protein 438 (828 aa).

3 disordered regions span residues 1-29, 143-173, and 193-231; these read MQNSVSVPPKDEGESNIPSGTIQSRKGLQ, KSGCSKAPAQTQMCPQMSPSPPHHPELLYKP, and ALTNGSDHGDLRPPVTNTHGSLNPPATPASSTPEEPAKQ. 2 stretches are compositionally biased toward polar residues: residues 16–29 and 150–159; these read NIPSGTIQSRKGLQ and PAQTQMCPQM. 3 consecutive C2H2-type zinc fingers follow at residues 507 to 529, 535 to 557, and 567 to 590; these read HRCHVCNHHFQFKQHLRDHMNTH, YSCRICRKSYVRPGSLSTHMKLH, and MCCEFCAKVFGHIRVYFGHLKEVH. The tract at residues 680-721 is disordered; it reads EGTFPGSKGTQEELVQHASPDWKRHPERGKPEKVHSSSEESH. A compositionally biased stretch (basic and acidic residues) spans 689–721; that stretch reads TQEELVQHASPDWKRHPERGKPEKVHSSSEESH. A C2H2-type 4 zinc finger spans residues 776-799; it reads FNCLLCAEMLGRKEDLLHHWKHQH.

It belongs to the krueppel C2H2-type zinc-finger protein family. As to expression, ubiquitous.

The protein resides in the nucleus. Its function is as follows. Isoform 1 acts as a transcriptional repressor. The sequence is that of Zinc finger protein 438 (ZNF438) from Homo sapiens (Human).